The chain runs to 160 residues: 3-hydroxyacyl-[acyl-carrier-protein] dehydratase FabZ (160 aa).

His-58 is an active-site residue.

It belongs to the thioester dehydratase family. FabZ subfamily.

The protein resides in the cytoplasm. The enzyme catalyses a (3R)-hydroxyacyl-[ACP] = a (2E)-enoyl-[ACP] + H2O. Its function is as follows. Involved in unsaturated fatty acids biosynthesis. Catalyzes the dehydration of short chain beta-hydroxyacyl-ACPs and long chain saturated and unsaturated beta-hydroxyacyl-ACPs. The polypeptide is 3-hydroxyacyl-[acyl-carrier-protein] dehydratase FabZ (Ruegeria sp. (strain TM1040) (Silicibacter sp.)).